Here is a 258-residue protein sequence, read N- to C-terminus: Protein OS-9 homolog (258 aa).

Residues 1–18 (MNWTSLVYLWFIFKSIFA) form the signal peptide. 3 N-linked (GlcNAc...) asparagine glycosylation sites follow: asparagine 2, asparagine 51, and asparagine 70. In terms of domain architecture, MRH spans 114-237 (TSCVFSFNLH…HINVPKLCSL (124 aa)). Cysteine 116 and cysteine 132 are oxidised to a cystine. A mannooligosaccharide derivative-binding residues include tryptophan 127 and glutamine 139. The N-linked (GlcNAc...) asparagine glycan is linked to asparagine 165. Disulfide bonds link cysteine 193–cysteine 223 and cysteine 208–cysteine 235. Residues aspartate 194, arginine 200, glutamate 219, and tyrosine 225 each contribute to the a mannooligosaccharide derivative site.

The protein belongs to the OS-9 family. Interacts with missfolded ER lumenal proteins.

Its subcellular location is the endoplasmic reticulum membrane. Its function is as follows. Lectin involved in the quality control of the secretory pathway. As a member of the endoplasmic reticulum-associated degradation lumenal (ERAD-L) surveillance system, targets misfolded endoplasmic reticulum lumenal glycoproteins for degradation. This chain is Protein OS-9 homolog (YOS9), found in Candida albicans (strain SC5314 / ATCC MYA-2876) (Yeast).